A 363-amino-acid polypeptide reads, in one-letter code: Flagellar P-ring protein 2 (363 aa).

A signal peptide spans 1 to 20; sequence MKRIVLLLMSVALFSTAAQA.

The protein belongs to the FlgI family. In terms of assembly, the basal body constitutes a major portion of the flagellar organelle and consists of four rings (L,P,S, and M) mounted on a central rod.

Its subcellular location is the periplasm. It localises to the bacterial flagellum basal body. In terms of biological role, assembles around the rod to form the L-ring and probably protects the motor/basal body from shearing forces during rotation. The protein is Flagellar P-ring protein 2 (flgI2) of Vibrio parahaemolyticus serotype O3:K6 (strain RIMD 2210633).